A 98-amino-acid polypeptide reads, in one-letter code: NADH-ubiquinone oxidoreductase chain 4L (98 aa).

3 helical membrane passes run 1 to 21, 29 to 49, and 61 to 81; these read MPSI…GMLV, SLLC…LTAL, and IILL…LVMV.

The protein belongs to the complex I subunit 4L family. Core subunit of respiratory chain NADH dehydrogenase (Complex I) which is composed of 45 different subunits.

The protein localises to the mitochondrion inner membrane. It catalyses the reaction a ubiquinone + NADH + 5 H(+)(in) = a ubiquinol + NAD(+) + 4 H(+)(out). Its function is as follows. Core subunit of the mitochondrial membrane respiratory chain NADH dehydrogenase (Complex I) which catalyzes electron transfer from NADH through the respiratory chain, using ubiquinone as an electron acceptor. Part of the enzyme membrane arm which is embedded in the lipid bilayer and involved in proton translocation. This is NADH-ubiquinone oxidoreductase chain 4L (MT-ND4L) from Oryctolagus cuniculus (Rabbit).